A 399-amino-acid chain; its full sequence is MSGAEEAGGGGPAAGPAGAVPAGVGVGVGPGAAAGPAAAALGEAAGPGIPDEAGLAGARQLQEAAGDPDAPPKKRLRAAEAAEAAAAAVAAGSGKLEERLYSVLCCTVCLDLPKASVYQCTNGHLMCAGCFIHLLADARLKEEQATCPNCRCEISKSLCCRNLAVEKAVSELPSECGFCLRQFPRSLLERHQKEECQDRVTQCKYKRIGCPWHGPFHELTVHEAACAHPTKTGNELMEILDEMDQSHRKEMQLYNSIFSLLSFEKIGYTEVQFRPYRTDDFITRLYYETPRFTVLNQTWVLKARVNDSERNPNLSCKRTLSFQLLLKSKVTAPLECSFLLLKGPYDDVRISPVIYHFVFTNESNETDYVPLPIIDSVECNKLLAAKNINLRLFLFQIQK.

Gly residues predominate over residues 1–13; the sequence is MSGAEEAGGGGPA. Positions 1–20 are disordered; that stretch reads MSGAEEAGGGGPAAGPAGAV. The RING-type; degenerate zinc finger occupies 106–151; that stretch reads CTVCLDLPKASVYQCTNGHLMCAGCFIHLLADARLKEEQATCPNCR. The TRAF-type zinc-finger motif lies at 152-210; the sequence is CEISKSLCCRNLAVEKAVSELPSECGFCLRQFPRSLLERHQKEECQDRVTQCKYKRIGC.

It belongs to the ZFTRAF1 family. Interacts with LGALS3.

Its subcellular location is the cytoplasm. It localises to the perinuclear region. This is Zinc finger TRAF-type-containing protein 1 from Rattus norvegicus (Rat).